A 143-amino-acid chain; its full sequence is AP-2 complex subunit sigma (143 aa).

The protein belongs to the adaptor complexes small subunit family. Adaptor protein complex 2 (AP-2) is a heterotetramer composed of two large adaptins (alpha-type subunit APL3 and beta-type subunit APL1), a medium chain (mu-type subunit APM4) and a small adaptin (sigma-type subunit APS2).

The protein resides in the cell membrane. It is found in the membrane. It localises to the coated pit. Its function is as follows. Component of the adaptor complexes which link clathrin to receptors in coated vesicles. Clathrin-associated protein complexes are believed to interact with the cytoplasmic tails of membrane proteins, leading to their selection and concentration. This chain is AP-2 complex subunit sigma (APS2), found in Gibberella zeae (strain ATCC MYA-4620 / CBS 123657 / FGSC 9075 / NRRL 31084 / PH-1) (Wheat head blight fungus).